Consider the following 819-residue polypeptide: Serine/threonine-protein phosphatase 1 regulatory subunit 10 (819 aa).

In terms of domain architecture, TFIIS N-terminal spans 73 to 147 (KLLNNWLTYA…NDWMAVIRSQ (75 aa)). Disordered regions lie at residues 151 to 204 (QPAD…KFRS), 296 to 391 (KIKK…RKTV), and 495 to 785 (SVPD…GGDM). 2 stretches are compositionally biased toward basic and acidic residues: residues 153-165 (ADKEKKKKKEDAK) and 173-190 (KTSEAKSEDNGDKKEKPK). A compositionally biased stretch (polar residues) spans 305 to 327 (SPTSNKASPFDSKSPTEASSLTK). Positions 386–415 (KKRKTVSWPEESRLREYFYFELDETERVNV) match the PP1-binding motif motif. Basic and acidic residues predominate over residues 495 to 504 (SVPDTPHEPD). Polar residues-rich tracts occupy residues 533 to 543 (MDQSTESQSPD) and 560 to 578 (MGSSKSPPNTLPGTMQEIL). A compositionally biased stretch (basic and acidic residues) spans 589 to 604 (KPEDLMKQPDFSEKIK). Positions 606–618 (LLGSLQNQNQNQG) are enriched in low complexity. 2 stretches are compositionally biased toward pro residues: residues 635-663 (FPPPSQKNHQPPPPHHQPPPPHYPPPGPN) and 670-695 (HGPPGGPRMMGPPPPQRDGYWEPPPN). 2 stretches are compositionally biased toward basic and acidic residues: residues 704 to 715 (HGGERGGMRGGD) and 758 to 777 (HGDHRGHEGHRGHGGHGDHR). The C3H1-type zinc-finger motif lies at 785–813 (MSTRPTCRHFMMKGNCRYENNCAFYHPGI).

In terms of assembly, component of the PNUTS-PP1 complex (also named PTW/PP1 complex).

It is found in the nucleus. Its subcellular location is the chromosome. In terms of biological role, substrate-recognition component of the PNUTS-PP1 protein phosphatase complex, a protein phosphatase 1 (PP1) complex that promotes RNA polymerase II transcription pause-release, allowing transcription elongation. Promoter-proximal pausing by RNA polymerase II is a transcription halt following transcription initiation but prior to elongation, which acts as a checkpoint to control that transcripts are favorably configured for transcriptional elongation. The PNUTS-PP1 complex mediates the release of RNA polymerase II from promoter-proximal region of genes by catalyzing dephosphorylation of proteins involved in transcription. In some context, PPP1R10/PNUTS also acts as an inhibitor of protein phosphatase 1 (PP1) activity by preventing access to substrates. The sequence is that of Serine/threonine-protein phosphatase 1 regulatory subunit 10 (ppp1r10) from Xenopus laevis (African clawed frog).